Here is a 375-residue protein sequence, read N- to C-terminus: Stomatin-2 (375 aa).

The interval 1–75 (MKTQPSEESA…IPVPTGQPRG (75 aa)) is disordered. Residues 11 to 50 (SPAPVNPGNSGNSGNRRASSTRISFSDQLDGGDSGDSSSN) show a composition bias toward low complexity. The chain crosses the membrane as a helical span at residues 120-140 (GLGFCGWFLMGLSWIMVISTF).

The protein belongs to the band 7/mec-2 family.

It localises to the membrane. Its function is as follows. May be involved in cilia-related function. The chain is Stomatin-2 (sto-2) from Caenorhabditis elegans.